Reading from the N-terminus, the 133-residue chain is Profilin (133 aa).

The protein belongs to the profilin family.

Functionally, more likely to influence phosphoinositide metabolism than actin assembly. This Cowpox virus (strain GRI-90 / Grishak) (CPV) protein is Profilin.